The chain runs to 247 residues: 1-(5-phosphoribosyl)-5-[(5-phosphoribosylamino)methylideneamino] imidazole-4-carboxamide isomerase (247 aa).

Asp-8 serves as the catalytic Proton acceptor. The active-site Proton donor is Asp-131.

Belongs to the HisA/HisF family.

Its subcellular location is the cytoplasm. The catalysed reaction is 1-(5-phospho-beta-D-ribosyl)-5-[(5-phospho-beta-D-ribosylamino)methylideneamino]imidazole-4-carboxamide = 5-[(5-phospho-1-deoxy-D-ribulos-1-ylimino)methylamino]-1-(5-phospho-beta-D-ribosyl)imidazole-4-carboxamide. It functions in the pathway amino-acid biosynthesis; L-histidine biosynthesis; L-histidine from 5-phospho-alpha-D-ribose 1-diphosphate: step 4/9. This Cupriavidus metallidurans (strain ATCC 43123 / DSM 2839 / NBRC 102507 / CH34) (Ralstonia metallidurans) protein is 1-(5-phosphoribosyl)-5-[(5-phosphoribosylamino)methylideneamino] imidazole-4-carboxamide isomerase.